The following is a 131-amino-acid chain: Fatty acid-binding protein (131 aa).

(5Z,8Z,11Z,14Z)-eicosatetraenoate contacts are provided by residues arginine 106 and 126–128; that span reads RPY. Residues arginine 106 and 126 to 128 each bind (9Z)-octadecenoate; that span reads RPY.

It belongs to the calycin superfamily. Fatty-acid binding protein (FABP) family.

Its subcellular location is the cytoplasm. FABPs are thought to play a role in the intracellular transport of long-chain fatty acids and their acyl-CoA esters. This is Fatty acid-binding protein from Lepidoglyphus destructor (Storage mite).